A 153-amino-acid chain; its full sequence is NAD(P)H-quinone oxidoreductase subunit N (153 aa).

The protein belongs to the complex I NdhN subunit family. As to quaternary structure, NDH-1 can be composed of about 15 different subunits; different subcomplexes with different compositions have been identified which probably have different functions.

Its subcellular location is the cellular thylakoid membrane. The catalysed reaction is a plastoquinone + NADH + (n+1) H(+)(in) = a plastoquinol + NAD(+) + n H(+)(out). It catalyses the reaction a plastoquinone + NADPH + (n+1) H(+)(in) = a plastoquinol + NADP(+) + n H(+)(out). Its function is as follows. NDH-1 shuttles electrons from an unknown electron donor, via FMN and iron-sulfur (Fe-S) centers, to quinones in the respiratory and/or the photosynthetic chain. The immediate electron acceptor for the enzyme in this species is believed to be plastoquinone. Couples the redox reaction to proton translocation, and thus conserves the redox energy in a proton gradient. Cyanobacterial NDH-1 also plays a role in inorganic carbon-concentration. This Synechococcus sp. (strain CC9605) protein is NAD(P)H-quinone oxidoreductase subunit N.